The chain runs to 127 residues: Glycine cleavage system H protein (127 aa).

One can recognise a Lipoyl-binding domain in the interval 24–106; the sequence is TATIGITDYA…YAEGWMLKLK (83 aa). The residue at position 65 (K65) is an N6-lipoyllysine.

This sequence belongs to the GcvH family. As to quaternary structure, the glycine cleavage system is composed of four proteins: P, T, L and H. (R)-lipoate is required as a cofactor.

The glycine cleavage system catalyzes the degradation of glycine. The H protein shuttles the methylamine group of glycine from the P protein to the T protein. The sequence is that of Glycine cleavage system H protein from Opitutus terrae (strain DSM 11246 / JCM 15787 / PB90-1).